A 558-amino-acid chain; its full sequence is Armadillo repeat-containing X-linked protein 5 (558 aa).

2 stretches are compositionally biased toward basic and acidic residues: residues 1 to 14 (MVDSGTEARARGKA) and 139 to 156 (KSHDKANTGSRPDRREET). Disordered regions lie at residues 1 to 35 (MVDSGTEARARGKAEAGLQDGISGPATARVNGKTQ) and 139 to 165 (KSHDKANTGSRPDRREETSIGMKSSDE). The stretch at 300 to 339 (CKSRGFSLEPKEFDKLVALLKLTKDPFIHEIATMIMGISP) is one ARM 1 repeat. Positions 369–388 (HPGALSMVDDSSESSEEPKS) are disordered. ARM repeat units lie at residues 422 to 461 (IKFEDHYVITSYIPDFLTLLNKGSVKTKFYVLKVFSCLSK), 463 to 503 (HANT…NINF), and 520 to 558 (SELISIFQEAKQFGQKLQDLAEHSDPEVRDKVIRLILKL).

It belongs to the eutherian X-chromosome-specific Armcx family.

The sequence is that of Armadillo repeat-containing X-linked protein 5 (ARMCX5) from Homo sapiens (Human).